The following is a 287-amino-acid chain: Bifunctional protein FolD (287 aa).

Residues 167–169 and threonine 192 contribute to the NADP(+) site; that span reads GRS.

It belongs to the tetrahydrofolate dehydrogenase/cyclohydrolase family. In terms of assembly, homodimer.

It carries out the reaction (6R)-5,10-methylene-5,6,7,8-tetrahydrofolate + NADP(+) = (6R)-5,10-methenyltetrahydrofolate + NADPH. The enzyme catalyses (6R)-5,10-methenyltetrahydrofolate + H2O = (6R)-10-formyltetrahydrofolate + H(+). It participates in one-carbon metabolism; tetrahydrofolate interconversion. In terms of biological role, catalyzes the oxidation of 5,10-methylenetetrahydrofolate to 5,10-methenyltetrahydrofolate and then the hydrolysis of 5,10-methenyltetrahydrofolate to 10-formyltetrahydrofolate. The chain is Bifunctional protein FolD from Sorangium cellulosum (strain So ce56) (Polyangium cellulosum (strain So ce56)).